The primary structure comprises 364 residues: Probable dual-specificity RNA methyltransferase RlmN (364 aa).

The Proton acceptor role is filled by glutamate 107. In terms of domain architecture, Radical SAM core spans 113-346 (HDYGNSVCVT…ATIRREQGSD (234 aa)). A disulfide bond links cysteine 120 and cysteine 351. Residues cysteine 127, cysteine 131, and cysteine 134 each contribute to the [4Fe-4S] cluster site. Residues 177 to 178 (GE), serine 209, 232 to 234 (SLH), and asparagine 308 each bind S-adenosyl-L-methionine. Cysteine 351 serves as the catalytic S-methylcysteine intermediate.

Belongs to the radical SAM superfamily. RlmN family. [4Fe-4S] cluster is required as a cofactor.

It is found in the cytoplasm. It catalyses the reaction adenosine(2503) in 23S rRNA + 2 reduced [2Fe-2S]-[ferredoxin] + 2 S-adenosyl-L-methionine = 2-methyladenosine(2503) in 23S rRNA + 5'-deoxyadenosine + L-methionine + 2 oxidized [2Fe-2S]-[ferredoxin] + S-adenosyl-L-homocysteine. The catalysed reaction is adenosine(37) in tRNA + 2 reduced [2Fe-2S]-[ferredoxin] + 2 S-adenosyl-L-methionine = 2-methyladenosine(37) in tRNA + 5'-deoxyadenosine + L-methionine + 2 oxidized [2Fe-2S]-[ferredoxin] + S-adenosyl-L-homocysteine. Functionally, specifically methylates position 2 of adenine 2503 in 23S rRNA and position 2 of adenine 37 in tRNAs. Confers resistance to some classes of antibiotics. The chain is Probable dual-specificity RNA methyltransferase RlmN from Staphylococcus aureus (strain MW2).